Reading from the N-terminus, the 315-residue chain is Cobalamin biosynthesis protein CobD (315 aa).

The next 7 helical transmembrane spans lie at 1 to 21 (MLDI…YWFP), 50 to 70 (VFGG…PFII), 79 to 99 (VIYH…KSLH), 151 to 171 (DGII…AMMY), 209 to 229 (VTGI…FYSI), 250 to 270 (AAAA…GEVV), and 291 to 311 (IILM…IICF).

It belongs to the CobD/CbiB family.

It is found in the cell membrane. Its pathway is cofactor biosynthesis; adenosylcobalamin biosynthesis. Its function is as follows. Converts cobyric acid to cobinamide by the addition of aminopropanol on the F carboxylic group. The polypeptide is Cobalamin biosynthesis protein CobD (Clostridium acetobutylicum (strain ATCC 824 / DSM 792 / JCM 1419 / IAM 19013 / LMG 5710 / NBRC 13948 / NRRL B-527 / VKM B-1787 / 2291 / W)).